The chain runs to 822 residues: Phenylalanine--tRNA ligase beta subunit (822 aa).

One can recognise a tRNA-binding domain in the interval leucine 44–leucine 162. Residues glutamine 201–asparagine 224 form a disordered region. In terms of domain architecture, B5 spans arginine 430–proline 513. Residues aspartate 491, aspartate 497, and aspartate 501 each contribute to the Mg(2+) site. Positions proline 730–arginine 822 constitute an FDX-ACB domain.

The protein belongs to the phenylalanyl-tRNA synthetase beta subunit family. Type 1 subfamily. In terms of assembly, tetramer of two alpha and two beta subunits. Mg(2+) is required as a cofactor.

It is found in the cytoplasm. The catalysed reaction is tRNA(Phe) + L-phenylalanine + ATP = L-phenylalanyl-tRNA(Phe) + AMP + diphosphate + H(+). The sequence is that of Phenylalanine--tRNA ligase beta subunit from Onion yellows phytoplasma (strain OY-M).